We begin with the raw amino-acid sequence, 446 residues long: MKLFGTSGIRMKNLDPLIAYKVGFAISKNFKKAVIGRDTRTTGNLIESAITAGLLNGGCDVTILGIVPTPVLGFSAKSHDIGIMITASHNPPEYNGIKLFNNNGTSFTPNQEESLEEIIEKSDFLDPSWDIVGNVSEDKTAVKKYLDYILSNINIKKKFNVVVDCANAAACGISPNLFTNAGCKVISVNSHCDGRFVGRMPEPNEKNLVETVDIVKGLNLSGRDFIGIAHDGDADRMIAIDEMGRVTDFDKLLAAFCKYVVQKTNAKKIVTTVDASMAIEEYLKEFGAEVIRTKIGDVSVAYEIEKTGAIFGGEPSGTWIHKSIHLTPDGILSGLRVLEMMEFYDKRLCEIMDEVPSYINLREKLPCPDELKNKVMKYVSKEGKLLFKKEPETLDGVRFSFENGWILIRPSGTESYIRVRVEAKDETFANELLNNGISLVNNGILK.

Ser88 functions as the Phosphoserine intermediate in the catalytic mechanism. Residues Ser88, Asp231, Asp233, and Asp235 each coordinate Mg(2+). The residue at position 88 (Ser88) is a Phosphoserine.

This sequence belongs to the phosphohexose mutase family. The cofactor is Mg(2+). Post-translationally, activated by phosphorylation.

The enzyme catalyses alpha-D-glucosamine 1-phosphate = D-glucosamine 6-phosphate. In terms of biological role, catalyzes the conversion of glucosamine-6-phosphate to glucosamine-1-phosphate. This chain is Phosphoglucosamine mutase, found in Methanococcus vannielii (strain ATCC 35089 / DSM 1224 / JCM 13029 / OCM 148 / SB).